The primary structure comprises 254 residues: Nodulation protein J (254 aa).

Transmembrane regions (helical) follow at residues 25-45 (ASVLGSVIDPLIMLFGLGVGL), 60-80 (FLACGLILTSAMSASNYEMLY), 106-126 (LIGEVLWAAYEGVVAGTIVAV), 133-153 (YIPGWSVIYILPDILFVALIF), 169-189 (LFAFYQSIAIAPLVFLSGVIV), and 230-250 (LLLSLLYASVMVFISAKVICV). An ABC transmembrane type-2 domain is found at 25-251 (ASVLGSVIDP…FISAKVICVR (227 aa)).

The protein belongs to the ABC-2 integral membrane protein family. Lipooligosaccharide exporter (TC 3.A.1.102) subfamily. The complex is composed of two ATP-binding proteins (NodI) and two transmembrane proteins (NodJ).

The protein localises to the cell inner membrane. Functionally, part of the ABC transporter complex NodIJ involved in the export of the nodulation factors (Nod factors), the bacterial signal molecules that induce symbiosis and subsequent nodulation induction. Nod factors are LCO (lipo-chitin oligosaccharide), a modified beta-1,4-linked N-acetylglucosamine oligosaccharide. This subunit encodes the transporter. This Azorhizobium caulinodans (strain ATCC 43989 / DSM 5975 / JCM 20966 / LMG 6465 / NBRC 14845 / NCIMB 13405 / ORS 571) protein is Nodulation protein J (nodJ).